Reading from the N-terminus, the 183-residue chain is Ubiquitin-conjugating enzyme E2 H (183 aa).

Residues 1–150 (MSSPSPGKRR…IKEYIQKYAT (150 aa)) form the UBC core domain. Residue Lys-60 is modified to N6-acetyllysine. Catalysis depends on Cys-87, which acts as the Glycyl thioester intermediate. A disordered region spans residues 152 to 183 (EALKEQEEGTGDSSSESSMSDFSEDEAQDMEL). Positions 163-172 (DSSSESSMSD) are enriched in low complexity. A compositionally biased stretch (acidic residues) spans 173-183 (FSEDEAQDMEL).

The protein belongs to the ubiquitin-conjugating enzyme family. In terms of assembly, interacts with MAEA and WDR26, components of the CTLH complex that contains GID4, RANBP9 and/or RANBP10, MKLN1, MAEA, RMND5A (or alternatively its paralog RMND5B), GID8, ARMC8, WDR26 and YPEL5. Autoubiquitinated in vitro in the presence of NEDD4L.

It carries out the reaction S-ubiquitinyl-[E1 ubiquitin-activating enzyme]-L-cysteine + [E2 ubiquitin-conjugating enzyme]-L-cysteine = [E1 ubiquitin-activating enzyme]-L-cysteine + S-ubiquitinyl-[E2 ubiquitin-conjugating enzyme]-L-cysteine.. It catalyses the reaction S-ubiquitinyl-[E1 ubiquitin-activating enzyme]-L-cysteine + [acceptor protein]-L-lysine = [E1 ubiquitin-activating enzyme]-L-cysteine + N(6)-monoubiquitinyl-[acceptor protein]-L-lysine.. The protein operates within protein modification; protein ubiquitination. Functionally, accepts ubiquitin from the E1 complex and catalyzes its covalent attachment to other proteins. E2 ubiquitin conjugating enzyme that transfers ubiquitin to MAEA, a core component of the CTLH E3 ubiquitin-protein ligase complex. In vitro catalyzes 'Lys-11'- and 'Lys-48'-linked polyubiquitination. Capable, in vitro, to ubiquitinate histone H2A. In Homo sapiens (Human), this protein is Ubiquitin-conjugating enzyme E2 H (UBE2H).